We begin with the raw amino-acid sequence, 249 residues long: Metallo-beta-lactamase type 2 (249 aa).

The N-terminal stretch at Met1 to Gly22 is a signal peptide. 5 residues coordinate Zn(2+): His98, His100, Asp102, His161, and Cys180. Substrate is bound at residue Lys183. His222 is a binding site for Zn(2+).

Belongs to the metallo-beta-lactamase superfamily. Class-B beta-lactamase family. As to quaternary structure, monomer. It depends on Zn(2+) as a cofactor.

It is found in the periplasm. The catalysed reaction is a beta-lactam + H2O = a substituted beta-amino acid. Functionally, confers resistance to the different beta-lactams antibiotics (penicillin, cephalosporin and carbapenem) via the hydrolysis of the beta-lactam ring. In Elizabethkingia meningoseptica (Chryseobacterium meningosepticum), this protein is Metallo-beta-lactamase type 2 (blaB2).